The primary structure comprises 154 residues: Transcriptional repressor NrdR (154 aa).

A zinc finger lies at 3–34; sequence CPFCRHPDSRVVDSRETDEGQAIRRRRSCPEC. The ATP-cone domain maps to 46–136; sequence LAVVKRSGVT…VYRSFSSAED (91 aa).

Belongs to the NrdR family. Zn(2+) serves as cofactor.

Negatively regulates transcription of bacterial ribonucleotide reductase nrd genes and operons by binding to NrdR-boxes. The protein is Transcriptional repressor NrdR of Mycolicibacterium gilvum (strain PYR-GCK) (Mycobacterium gilvum (strain PYR-GCK)).